A 383-amino-acid polypeptide reads, in one-letter code: Sterol 24-C-methyltransferase ERG6 (383 aa).

Ser-2 is modified (N-acetylserine). Residue Ser-99 is modified to Phosphoserine.

Belongs to the class I-like SAM-binding methyltransferase superfamily. Erg6/SMT family. As to quaternary structure, interacts with ERG28.

The protein localises to the microsome. It localises to the mitochondrion. It catalyses the reaction zymosterol + S-adenosyl-L-methionine = fecosterol + S-adenosyl-L-homocysteine + H(+). Its pathway is steroid metabolism; ergosterol biosynthesis; ergosterol from zymosterol: step 1/5. Sterol 24-C-methyltransferase; part of the third module of ergosterol biosynthesis pathway that includes the late steps of the pathway. ERG6 catalyzes the methyl transfer from S-adenosyl-methionine to the C-24 of zymosterol to form fecosterol. The third module or late pathway involves the ergosterol synthesis itself through consecutive reactions that mainly occur in the endoplasmic reticulum (ER) membrane. Firstly, the squalene synthase ERG9 catalyzes the condensation of 2 farnesyl pyrophosphate moieties to form squalene, which is the precursor of all steroids. Squalene synthase is crucial for balancing the incorporation of farnesyl diphosphate (FPP) into sterol and nonsterol isoprene synthesis. Secondly, the squalene epoxidase ERG1 catalyzes the stereospecific oxidation of squalene to (S)-2,3-epoxysqualene, which is considered to be a rate-limiting enzyme in steroid biosynthesis. Then, the lanosterol synthase ERG7 catalyzes the cyclization of (S)-2,3 oxidosqualene to lanosterol, a reaction that forms the sterol core. In the next steps, lanosterol is transformed to zymosterol through a complex process involving various demethylation, reduction and desaturation reactions. The lanosterol 14-alpha-demethylase ERG11 (also known as CYP51) catalyzes C14-demethylation of lanosterol to produce 4,4'-dimethyl cholesta-8,14,24-triene-3-beta-ol, which is critical for ergosterol biosynthesis. The C-14 reductase ERG24 reduces the C14=C15 double bond of 4,4-dimethyl-cholesta-8,14,24-trienol to produce 4,4-dimethyl-cholesta-8,24-dienol. 4,4-dimethyl-cholesta-8,24-dienol is substrate of the C-4 demethylation complex ERG25-ERG26-ERG27 in which ERG25 catalyzes the three-step monooxygenation required for the demethylation of 4,4-dimethyl and 4alpha-methylsterols, ERG26 catalyzes the oxidative decarboxylation that results in a reduction of the 3-beta-hydroxy group at the C-3 carbon to an oxo group, and ERG27 is responsible for the reduction of the keto group on the C-3. ERG28 has a role as a scaffold to help anchor ERG25, ERG26 and ERG27 to the endoplasmic reticulum and ERG29 regulates the activity of the iron-containing C4-methylsterol oxidase ERG25. Then, the sterol 24-C-methyltransferase ERG6 catalyzes the methyl transfer from S-adenosyl-methionine to the C-24 of zymosterol to form fecosterol. The C-8 sterol isomerase ERG2 catalyzes the reaction which results in unsaturation at C-7 in the B ring of sterols and thus converts fecosterol to episterol. The sterol-C5-desaturase ERG3 then catalyzes the introduction of a C-5 double bond in the B ring to produce 5-dehydroepisterol. The C-22 sterol desaturase ERG5 further converts 5-dehydroepisterol into ergosta-5,7,22,24(28)-tetraen-3beta-ol by forming the C-22(23) double bond in the sterol side chain. Finally, ergosta-5,7,22,24(28)-tetraen-3beta-ol is substrate of the C-24(28) sterol reductase ERG4 to produce ergosterol. The sequence is that of Sterol 24-C-methyltransferase ERG6 from Saccharomyces cerevisiae (strain ATCC 204508 / S288c) (Baker's yeast).